Here is a 496-residue protein sequence, read N- to C-terminus: L-arabinose isomerase (496 aa).

4 residues coordinate Mn(2+): Glu-302, Glu-329, His-346, and His-445.

The protein belongs to the arabinose isomerase family. Mn(2+) serves as cofactor.

The catalysed reaction is beta-L-arabinopyranose = L-ribulose. It functions in the pathway carbohydrate degradation; L-arabinose degradation via L-ribulose; D-xylulose 5-phosphate from L-arabinose (bacterial route): step 1/3. Its function is as follows. Catalyzes the conversion of L-arabinose to L-ribulose. The polypeptide is L-arabinose isomerase (Thermotoga neapolitana (strain ATCC 49049 / DSM 4359 / NBRC 107923 / NS-E)).